The primary structure comprises 157 residues: Protein Smg (157 aa).

It belongs to the Smg family.

This chain is Protein Smg, found in Enterobacter sp. (strain 638).